The following is a 707-amino-acid chain: Elongation factor G (707 aa).

Positions 8 to 294 constitute a tr-type G domain; sequence ERYRNFGIIA…GVVDYLPSPL (287 aa). GTP-binding positions include 17 to 24, 92 to 96, and 146 to 149; these read AHIDAGKT, DTPGH, and NKMD.

This sequence belongs to the TRAFAC class translation factor GTPase superfamily. Classic translation factor GTPase family. EF-G/EF-2 subfamily.

It localises to the cytoplasm. In terms of biological role, catalyzes the GTP-dependent ribosomal translocation step during translation elongation. During this step, the ribosome changes from the pre-translocational (PRE) to the post-translocational (POST) state as the newly formed A-site-bound peptidyl-tRNA and P-site-bound deacylated tRNA move to the P and E sites, respectively. Catalyzes the coordinated movement of the two tRNA molecules, the mRNA and conformational changes in the ribosome. This chain is Elongation factor G, found in Hyphomonas neptunium (strain ATCC 15444).